The chain runs to 996 residues: Oxysterol-binding protein homolog 3 (996 aa).

Residues 1–183 are GOLD domain; that stretch reads METIDIQNRS…KKKILFNASV (183 aa). The tract at residues 75–114 is disordered; sequence GSSSNIEEHHRRSSQHSHSSSNGSDNKRKERSYSSLSISG. 2 positions are modified to phosphoserine: Ser-190 and Ser-193. A Phosphothreonine modification is found at Thr-210. One can recognise a PH domain in the interval 221-315; sequence GRYLQGYLLK…WVDALQTCFD (95 aa). Thr-323 is subject to Phosphothreonine. Position 324 is a phosphoserine (Ser-324). Phosphothreonine occurs at positions 325 and 352. Positions 338–372 are disordered; sequence EVINKSSPQDHDHLTPTATTKSALSHRQHTQKDMD. The short motif at 514–520 is the FFAT element; it reads EFFDAEE. The segment at 556 to 611 is disordered; the sequence is KEVQLSGSEQIASSSVESYTTNDENHSRKHLKNRHKNRRRGHPHHQKTKSAQSSTE. The span at 558–577 shows a compositional bias: polar residues; it reads VQLSGSEQIASSSVESYTTN. Over residues 582 to 603 the composition is skewed to basic residues; the sequence is SRKHLKNRHKNRRRGHPHHQKT. At Ser-605 the chain carries Phosphoserine. The OSBP-related domain (ORD) stretch occupies residues 642–982; sequence SLLSFLRKNV…YITGPKSYWE (341 aa). Residues 657-660, Lys-717, 745-746, and 945-949 contribute to the a 1,2-diacyl-sn-glycero-3-phospho-(1D-myo-inositol 4-phosphate) site; these read SIAM, HR, and EQLQR.

It belongs to the OSBP family. As to quaternary structure, interacts with SCS2.

The protein resides in the cytoplasm. The protein localises to the endoplasmic reticulum membrane. Lipid transport protein (LTP) involved in non-vesicular transfer of lipids between membranes. Functions in phosphoinositide-coupled directional transport of various lipids by carrying the lipid molecule in a hydrophobic pocket and transferring it between membranes through the cytosol. Involved in maintenance of intracellular sterol distribution and homeostasis. May serve as a sensor of PI4P levels at PM-ER membrane contact site, regulating PI4P phosphatase SAC1 activity. May be involved in ergosterol transport from the plasma membrane (PM) to the ER, however it does not bind sterols directly. Plays a role in the positive regulation of vesicular transport of ceramide from the ER to the Golgi, negatively regulating COPII-mediated ER export of cargos. This chain is Oxysterol-binding protein homolog 3, found in Saccharomyces cerevisiae (strain ATCC 204508 / S288c) (Baker's yeast).